We begin with the raw amino-acid sequence, 99 residues long: DNA-binding protein Fis (99 aa).

Positions 75-94 (QTRAANMLGINRGTLRKKLK) form a DNA-binding region, H-T-H motif.

The protein belongs to the transcriptional regulatory Fis family. Homodimer.

In terms of biological role, activates ribosomal RNA transcription. Plays a direct role in upstream activation of rRNA promoters. The chain is DNA-binding protein Fis from Haemophilus influenzae (strain PittEE).